We begin with the raw amino-acid sequence, 194 residues long: FMN-dependent NADH:quinone oxidoreductase (194 aa).

FMN-binding positions include Ser-10 and 90–93; that span reads MYNL.

This sequence belongs to the azoreductase type 1 family. As to quaternary structure, homodimer. FMN serves as cofactor.

It catalyses the reaction 2 a quinone + NADH + H(+) = 2 a 1,4-benzosemiquinone + NAD(+). The enzyme catalyses N,N-dimethyl-1,4-phenylenediamine + anthranilate + 2 NAD(+) = 2-(4-dimethylaminophenyl)diazenylbenzoate + 2 NADH + 2 H(+). Its function is as follows. Quinone reductase that provides resistance to thiol-specific stress caused by electrophilic quinones. Functionally, also exhibits azoreductase activity. Catalyzes the reductive cleavage of the azo bond in aromatic azo compounds to the corresponding amines. This is FMN-dependent NADH:quinone oxidoreductase from Haemophilus influenzae (strain ATCC 51907 / DSM 11121 / KW20 / Rd).